We begin with the raw amino-acid sequence, 1066 residues long: Isoleucine--tRNA ligase (1066 aa).

The 'HIGH' region signature appears at P49–T59. The 'KMSKS' region signature appears at K625–S629. K628 lines the ATP pocket.

The protein belongs to the class-I aminoacyl-tRNA synthetase family. IleS type 2 subfamily. Monomer. It depends on Zn(2+) as a cofactor.

The protein resides in the cytoplasm. It carries out the reaction tRNA(Ile) + L-isoleucine + ATP = L-isoleucyl-tRNA(Ile) + AMP + diphosphate. In terms of biological role, catalyzes the attachment of isoleucine to tRNA(Ile). As IleRS can inadvertently accommodate and process structurally similar amino acids such as valine, to avoid such errors it has two additional distinct tRNA(Ile)-dependent editing activities. One activity is designated as 'pretransfer' editing and involves the hydrolysis of activated Val-AMP. The other activity is designated 'posttransfer' editing and involves deacylation of mischarged Val-tRNA(Ile). This Pyrococcus furiosus (strain ATCC 43587 / DSM 3638 / JCM 8422 / Vc1) protein is Isoleucine--tRNA ligase.